A 97-amino-acid polypeptide reads, in one-letter code: ORF9b protein (97 aa).

The 90-residue stretch at 8-97 (MHPALRLVDP…PDEFVVVTVK (90 aa)) folds into the 9b domain. Positions 45 to 53 (ILRLGSPLS) match the Nuclear export signal motif.

Belongs to the coronavirus group 2 protein 9b family. Homodimer. Interacts with host TOMM70; the interaction occurs only with monomer.

It is found in the host cytoplasm. The protein localises to the host mitochondrion. Its function is as follows. Plays a role in inhibiting the host innate immune response by targeting the mitochondrial-associated innate immune response. Acts by binding to host TOMM70, inhibiting its binding to HSP90AB1 thereby disrupting the interferon activation pathway. This is ORF9b protein from Homo sapiens (Human).